The following is a 367-amino-acid chain: 2-aminoethylphosphonate--pyruvate transaminase (367 aa).

Residue Lys-193 is modified to N6-(pyridoxal phosphate)lysine.

It belongs to the class-V pyridoxal-phosphate-dependent aminotransferase family. PhnW subfamily. In terms of assembly, homodimer. Pyridoxal 5'-phosphate serves as cofactor.

It carries out the reaction (2-aminoethyl)phosphonate + pyruvate = phosphonoacetaldehyde + L-alanine. Functionally, involved in phosphonate degradation. The protein is 2-aminoethylphosphonate--pyruvate transaminase of Vibrio cholerae serotype O1 (strain ATCC 39541 / Classical Ogawa 395 / O395).